The chain runs to 475 residues: 3-isopropylmalate dehydratase large subunit (475 aa).

3 residues coordinate [4Fe-4S] cluster: C348, C408, and C411.

Belongs to the aconitase/IPM isomerase family. LeuC type 1 subfamily. In terms of assembly, heterodimer of LeuC and LeuD. The cofactor is [4Fe-4S] cluster.

The enzyme catalyses (2R,3S)-3-isopropylmalate = (2S)-2-isopropylmalate. It functions in the pathway amino-acid biosynthesis; L-leucine biosynthesis; L-leucine from 3-methyl-2-oxobutanoate: step 2/4. Its function is as follows. Catalyzes the isomerization between 2-isopropylmalate and 3-isopropylmalate, via the formation of 2-isopropylmaleate. This chain is 3-isopropylmalate dehydratase large subunit, found in Acidobacterium capsulatum (strain ATCC 51196 / DSM 11244 / BCRC 80197 / JCM 7670 / NBRC 15755 / NCIMB 13165 / 161).